Here is a 357-residue protein sequence, read N- to C-terminus: Protein-glutamate methylesterase/protein-glutamine glutaminase (357 aa).

In terms of domain architecture, Response regulatory spans 3–120; the sequence is RVLVVDDSAF…SLDLYKIKEQ (118 aa). D54 carries the 4-aspartylphosphate modification. The CheB-type methylesterase domain maps to 161-355; the sequence is PGTGRQIVCI…ASITSCVKKE (195 aa). Residues S173, H200, and D296 contribute to the active site.

It belongs to the CheB family. Phosphorylated by CheA. Phosphorylation of the N-terminal regulatory domain activates the methylesterase activity.

The protein localises to the cytoplasm. It carries out the reaction [protein]-L-glutamate 5-O-methyl ester + H2O = L-glutamyl-[protein] + methanol + H(+). It catalyses the reaction L-glutaminyl-[protein] + H2O = L-glutamyl-[protein] + NH4(+). In terms of biological role, involved in the modulation of the chemotaxis system; catalyzes the demethylation of specific methylglutamate residues introduced into the chemoreceptors (methyl-accepting chemotaxis proteins) by CheR. B.subtilis has an effective methylation-independent adaptation system but must utilize the methylation system for adaptation to high concentrations of attractant. The chain is Protein-glutamate methylesterase/protein-glutamine glutaminase from Bacillus subtilis (strain 168).